The following is a 180-amino-acid chain: uncharacterized protein (180 aa).

Residues 45–180 (FVFSQVRTLD…GNRCAFWYAN (136 aa)) enclose the N-acetyltransferase domain.

The protein belongs to the acetyltransferase family. Ycf52 subfamily.

This is an uncharacterized protein from Prochlorococcus marinus (strain SARG / CCMP1375 / SS120).